The following is a 351-amino-acid chain: Leukotriene B4 receptor 1 (351 aa).

Residues 1-21 (MAANTTSTAATSSPGGMSLSL) are Extracellular-facing. Asn-4 carries an N-linked (GlcNAc...) asparagine glycan. The chain crosses the membrane as a helical span at residues 22–44 (LPIVLLSVALVVGLPGNSFVVWS). Residues 45-56 (ILKRMQKRSVTA) are Cytoplasmic-facing. Residues 57 to 77 (LLVLNLALADLAVLLTAPFFL) form a helical membrane-spanning segment. At 78 to 93 (HFLARGTWSFEVTGCR) the chain is on the extracellular side. Residues 94-115 (LCHYVCGVSMYASVLLITIMSL) traverse the membrane as a helical segment. Residues 116–140 (DRSLAVARPFVSQKVRTKAFARWVL) lie on the Cytoplasmic side of the membrane. A helical membrane pass occupies residues 141–161 (AGIWVVSFLLAIPVLVYRTVT). Residues 162-179 (PKNKTLICDSRYPSDGHK) lie on the Extracellular side of the membrane. Asn-164 is a glycosylation site (N-linked (GlcNAc...) asparagine). A helical transmembrane segment spans residues 180 to 200 (VFHLLFEAITGFLLPFLAVVA). The Cytoplasmic segment spans residues 201–222 (SYSDIGRRLQARRFRRSRRTGR). The helical transmembrane segment at 223–243 (LVVLIILAFAAFWLPYHLVNL) threads the bilayer. Residues 244–268 (VEAGRTLAGWDKNSPAGQRLKLARY) lie on the Extracellular side of the membrane. A helical membrane pass occupies residues 269–289 (VLIALAFLSSSVNPVLYACAG). Topologically, residues 290 to 351 (GGLLRSAGVG…TSSTPPESSK (62 aa)) are cytoplasmic. 2 stretches are compositionally biased toward polar residues: residues 311 to 327 (EVSSTRRGGTLVQTPKA) and 339 to 351 (SFMTSSTPPESSK). Residues 311–351 (EVSSTRRGGTLVQTPKATPTCPEPGPTDSFMTSSTPPESSK) form a disordered region.

Belongs to the G-protein coupled receptor 1 family. In terms of processing, phosphorylated by GRK6 upon leukotriene B4 binding; which promotes desensitization. In terms of tissue distribution, exclusively expressed in polymorphonuclear leukocytes.

Its subcellular location is the cell membrane. Functionally, receptor for leukotriene B4, a potent chemoattractant involved in inflammation and immune response. In Rattus norvegicus (Rat), this protein is Leukotriene B4 receptor 1 (Ltb4r).